The following is a 690-amino-acid chain: MGTVSSRRLWWPLPLLLLLLLGPTGTRAQEEDDDDYEELVLALRSEEDGLVDALQHGATATFHRCAKDSWRLPGTYVVVLKEETHRSQPERTARRLQAQAARRGYLIKLLHVFHDLLPGFLVKMSRDLLELALRLPHVDYIEEDSSVFAQSIPWNLERITPARYRADEYQPPNGGSLVEVYLLDTSIQSGHREIEGRVMVTDFGSVPEEDGTRFHRQASKCDSHGTHLAGVVSGRDAGVAKGASLRSLRVLNCQGKGTVSSTLIGLEFIRKSQLVQPVGPLVVLLPLAGGYSRVLNAACQRLARAGVVLVAAAGNFRDDACLYSPASAPEVITVGATNAQDQPVTLGTLGTNFGRCVDLFAPGEDIIGASSDCSTCFVSRSGTSQAAAHVAGIAAMMLSAKPELTLAELRQRLIHFSAKDVINEAWFPEDQRVLTPNLVAALPPSTHGAGWQLFCRTVWSAHSGPTRMATAMARCAPDEELLSCSSFSRSGRRRGERIEAQGGRRVCLAHNAFGGEGVYAIARCCLLPQANCSVHTAPPAGAGMGTRAHCHQQGHILTGCSSHWEVEDLGTHKPPVLRPGGQHDQCMGHRGASTHASCCHAPGLECKVKEHGLPAPQEQVTVTCEEGWTLTGCSALPGTSHILGAYAVDDTCVVRSRDVSTTSSTSEETVATVAICCRSQHLAQASQELQ.

A signal peptide spans 1–28; that stretch reads MGTVSSRRLWWPLPLLLLLLLGPTGTRA. The propeptide occupies 29 to 150; that stretch reads QEEDDDDYEE…IEEDSSVFAQ (122 aa). Tyrosine 36 is subject to Sulfotyrosine. Phosphoserine is present on serine 45. In terms of domain architecture, Inhibitor I9 spans 75–147; the sequence is TYVVVLKEET…VDYIEEDSSV (73 aa). The Peptidase S8 domain occupies 153-459; the sequence is PWNLERITPA…GWQLFCRTVW (307 aa). Active-site charge relay system residues include aspartate 184 and histidine 224. 2 disulfide bridges follow: cysteine 221-cysteine 253 and cysteine 321-cysteine 356. The Charge relay system role is filled by serine 384. The tract at residues 448–690 is C-terminal domain; the sequence is GAGWQLFCRT…HLAQASQELQ (243 aa). Disulfide bonds link cysteine 455-cysteine 525, cysteine 475-cysteine 524, and cysteine 484-cysteine 507. Asparagine 531 carries an N-linked (GlcNAc...) asparagine glycan. 6 disulfide bridges follow: cysteine 532/cysteine 599, cysteine 550/cysteine 598, cysteine 560/cysteine 586, cysteine 606/cysteine 677, cysteine 624/cysteine 676, and cysteine 633/cysteine 652. Serine 686 carries the phosphoserine modification.

Belongs to the peptidase S8 family. In terms of assembly, monomer. Can self-associate to form dimers and higher multimers which may have increased LDLR degrading activity. The precursor protein but not the mature protein may form multimers. Interacts with APOB, VLDLR, LRP8/APOER2 and BACE1. The full-length immature form (pro-PCSK9) interacts with SCNN1A, SCNN1B and SCNN1G. The pro-PCSK9 form (via C-terminal domain) interacts with LDLR. Interacts (via the C-terminal domain) with ANXA2 (via repeat Annexin 1); the interaction inhibits the degradation of LDLR. Ca(2+) serves as cofactor. Post-translationally, cleavage by furin and PCSK5 generates a truncated inactive protein that is unable to induce LDLR degradation. Undergoes autocatalytic cleavage in the endoplasmic reticulum to release the propeptide from the N-terminus and the cleavage of the propeptide is strictly required for its maturation and activation. The cleaved propeptide however remains associated with the catalytic domain through non-covalent interactions, preventing potential substrates from accessing its active site. As a result, it is secreted from cells as a propeptide-containing, enzymatically inactive protein. In terms of processing, phosphorylation protects the propeptide against proteolysis.

Its subcellular location is the cytoplasm. The protein resides in the secreted. It localises to the endosome. The protein localises to the lysosome. It is found in the cell surface. Its subcellular location is the endoplasmic reticulum. The protein resides in the golgi apparatus. Its activity is regulated as follows. Its proteolytic activity is autoinhibited by the non-covalent binding of the propeptide to the catalytic domain. Inhibited by EGTA. In terms of biological role, crucial player in the regulation of plasma cholesterol homeostasis. Binds to low-density lipid receptor family members: low density lipoprotein receptor (LDLR), very low density lipoprotein receptor (VLDLR), apolipoprotein E receptor (LRP1/APOER) and apolipoprotein receptor 2 (LRP8/APOER2), and promotes their degradation in intracellular acidic compartments. Acts via a non-proteolytic mechanism to enhance the degradation of the hepatic LDLR through a clathrin LDLRAP1/ARH-mediated pathway. May prevent the recycling of LDLR from endosomes to the cell surface or direct it to lysosomes for degradation. Can induce ubiquitination of LDLR leading to its subsequent degradation. Inhibits intracellular degradation of APOB via the autophagosome/lysosome pathway in a LDLR-independent manner. Involved in the disposal of non-acetylated intermediates of BACE1 in the early secretory pathway. Inhibits epithelial Na(+) channel (ENaC)-mediated Na(+) absorption by reducing ENaC surface expression primarily by increasing its proteasomal degradation. Regulates neuronal apoptosis via modulation of LRP8/APOER2 levels and related anti-apoptotic signaling pathways. The protein is Proprotein convertase subtilisin/kexin type 9 (PCSK9) of Callithrix jacchus (White-tufted-ear marmoset).